A 245-amino-acid chain; its full sequence is 1-(5-phosphoribosyl)-5-[(5-phosphoribosylamino)methylideneamino] imidazole-4-carboxamide isomerase (245 aa).

The Proton acceptor role is filled by aspartate 8. Residue aspartate 129 is the Proton donor of the active site.

It belongs to the HisA/HisF family.

It localises to the cytoplasm. The enzyme catalyses 1-(5-phospho-beta-D-ribosyl)-5-[(5-phospho-beta-D-ribosylamino)methylideneamino]imidazole-4-carboxamide = 5-[(5-phospho-1-deoxy-D-ribulos-1-ylimino)methylamino]-1-(5-phospho-beta-D-ribosyl)imidazole-4-carboxamide. It participates in amino-acid biosynthesis; L-histidine biosynthesis; L-histidine from 5-phospho-alpha-D-ribose 1-diphosphate: step 4/9. The polypeptide is 1-(5-phosphoribosyl)-5-[(5-phosphoribosylamino)methylideneamino] imidazole-4-carboxamide isomerase (Pelobacter propionicus (strain DSM 2379 / NBRC 103807 / OttBd1)).